We begin with the raw amino-acid sequence, 99 residues long: uncharacterized protein (99 aa).

This is an uncharacterized protein from Dictyostelium discoideum (Social amoeba).